A 374-amino-acid polypeptide reads, in one-letter code: Histidinol-phosphate aminotransferase 1 (374 aa).

At K232 the chain carries N6-(pyridoxal phosphate)lysine.

Belongs to the class-II pyridoxal-phosphate-dependent aminotransferase family. Histidinol-phosphate aminotransferase subfamily. In terms of assembly, homodimer. The cofactor is pyridoxal 5'-phosphate.

It carries out the reaction L-histidinol phosphate + 2-oxoglutarate = 3-(imidazol-4-yl)-2-oxopropyl phosphate + L-glutamate. It functions in the pathway amino-acid biosynthesis; L-histidine biosynthesis; L-histidine from 5-phospho-alpha-D-ribose 1-diphosphate: step 7/9. The protein is Histidinol-phosphate aminotransferase 1 (hisC1) of Ralstonia nicotianae (strain ATCC BAA-1114 / GMI1000) (Ralstonia solanacearum).